Reading from the N-terminus, the 310-residue chain is ADP-L-glycero-D-manno-heptose-6-epimerase (310 aa).

NADP(+) is bound by residues 10 to 11, 31 to 32, Lys38, Lys53, 75 to 79, and Asn92; these read FI, DN, and EGACS. The active-site Proton acceptor is the Tyr140. An NADP(+)-binding site is contributed by Lys144. Asn169 provides a ligand contact to substrate. Residues Val170 and Lys178 each contribute to the NADP(+) site. Lys178 functions as the Proton acceptor in the catalytic mechanism. Substrate contacts are provided by residues Ser180, His187, 201–204, and Arg209; that span reads FEGS. At Lys267 the chain carries N6-acetyllysine. Tyr272 provides a ligand contact to substrate.

It belongs to the NAD(P)-dependent epimerase/dehydratase family. HldD subfamily. As to quaternary structure, homopentamer. NADP(+) serves as cofactor.

It catalyses the reaction ADP-D-glycero-beta-D-manno-heptose = ADP-L-glycero-beta-D-manno-heptose. Its pathway is nucleotide-sugar biosynthesis; ADP-L-glycero-beta-D-manno-heptose biosynthesis; ADP-L-glycero-beta-D-manno-heptose from D-glycero-beta-D-manno-heptose 7-phosphate: step 4/4. Functionally, catalyzes the interconversion between ADP-D-glycero-beta-D-manno-heptose and ADP-L-glycero-beta-D-manno-heptose via an epimerization at carbon 6 of the heptose. The polypeptide is ADP-L-glycero-D-manno-heptose-6-epimerase (Shigella boydii serotype 18 (strain CDC 3083-94 / BS512)).